Consider the following 178-residue polypeptide: Large ribosomal subunit protein uL6 (178 aa).

Belongs to the universal ribosomal protein uL6 family. As to quaternary structure, part of the 50S ribosomal subunit.

Its function is as follows. This protein binds to the 23S rRNA, and is important in its secondary structure. It is located near the subunit interface in the base of the L7/L12 stalk, and near the tRNA binding site of the peptidyltransferase center. The protein is Large ribosomal subunit protein uL6 of Staphylococcus saprophyticus subsp. saprophyticus (strain ATCC 15305 / DSM 20229 / NCIMB 8711 / NCTC 7292 / S-41).